The following is a 2360-amino-acid chain: Protein Ycf2 (2360 aa).

Disordered stretches follow at residues 172 to 193, 225 to 255, and 944 to 995; these read SSQL…GTED, TEIE…EMNN, and KRKK…KRKE. Positions 234-244 are enriched in low complexity; sequence KGLSGSSSKSR. Over residues 245–254 the composition is skewed to basic and acidic residues; the sequence is LFTEGEKEMN. Over residues 944–959 the composition is skewed to basic residues; the sequence is KRKKKKPEKRKKKKPE. Residues 960–993 are compositionally biased toward basic and acidic residues; sequence KRKEKKPEKRKEKKPEKRKEKKPEKRKEKKPEKR. An ATP-binding site is contributed by 1425–1432; that stretch reads GSIGSGRS. Disordered stretches follow at residues 1499-1518, 1843-2031, and 2098-2214; these read YEDR…YEPG, LVGS…LLRP, and PAEE…DGFS. Residues 1849 to 2011 are compositionally biased toward acidic residues; the sequence is TEEEVEGTEE…VEGTEDEEVE (163 aa). Over residues 2012 to 2024 the composition is skewed to basic and acidic residues; that stretch reads GTEKDSSQFDNDR. Acidic residues-rich tracts occupy residues 2098–2115 and 2122–2197; these read PAEE…EALE and GEEE…ENDS.

Belongs to the Ycf2 family.

The protein localises to the plastid. It is found in the chloroplast stroma. Functionally, probable ATPase of unknown function. Its presence in a non-photosynthetic plant (Epifagus virginiana) and experiments in tobacco indicate that it has an essential function which is probably not related to photosynthesis. This Oenothera argillicola (Appalachian evening primrose) protein is Protein Ycf2.